Here is a 393-residue protein sequence, read N- to C-terminus: Formate-dependent phosphoribosylglycinamide formyltransferase (393 aa).

N(1)-(5-phospho-beta-D-ribosyl)glycinamide-binding positions include E22–L23 and E82. ATP is bound by residues R114, K155, S160–Q165, E195–V198, and E203. In terms of domain architecture, ATP-grasp spans R119 to L308. E267 and E279 together coordinate Mg(2+). N(1)-(5-phospho-beta-D-ribosyl)glycinamide-binding positions include D286, K355, and R362–R363.

This sequence belongs to the PurK/PurT family. In terms of assembly, homodimer.

The enzyme catalyses N(1)-(5-phospho-beta-D-ribosyl)glycinamide + formate + ATP = N(2)-formyl-N(1)-(5-phospho-beta-D-ribosyl)glycinamide + ADP + phosphate + H(+). Its pathway is purine metabolism; IMP biosynthesis via de novo pathway; N(2)-formyl-N(1)-(5-phospho-D-ribosyl)glycinamide from N(1)-(5-phospho-D-ribosyl)glycinamide (formate route): step 1/1. Its function is as follows. Involved in the de novo purine biosynthesis. Catalyzes the transfer of formate to 5-phospho-ribosyl-glycinamide (GAR), producing 5-phospho-ribosyl-N-formylglycinamide (FGAR). Formate is provided by PurU via hydrolysis of 10-formyl-tetrahydrofolate. The polypeptide is Formate-dependent phosphoribosylglycinamide formyltransferase (Yersinia pseudotuberculosis serotype O:3 (strain YPIII)).